The sequence spans 146 residues: Globin (146 aa).

Alanine 1 is modified (N-acetylalanine). One can recognise a Globin domain in the interval alanine 1 to serine 146. Positions 65 and 97 each coordinate heme b.

It belongs to the globin family. In terms of assembly, homodimer.

The protein is Globin of Buccinum undatum (Common whelk).